The primary structure comprises 446 residues: Putative zinc metalloprotease NMA0084 (446 aa).

His18 is a binding site for Zn(2+). Glu19 is an active-site residue. Residue His22 participates in Zn(2+) binding. Transmembrane regions (helical) follow at residues 93–115 (IAIV…GLSF), 376–398 (FLAL…LDGG), and 419–438 (NIGL…VAFF). Positions 100–181 (PLTNLALAVL…KVAVGVQTAS (82 aa)) constitute a PDZ domain.

It belongs to the peptidase M50B family. It depends on Zn(2+) as a cofactor.

It localises to the cell inner membrane. The polypeptide is Putative zinc metalloprotease NMA0084 (Neisseria meningitidis serogroup A / serotype 4A (strain DSM 15465 / Z2491)).